Reading from the N-terminus, the 138-residue chain is Putative esterase HI_1161 (138 aa).

The protein belongs to the thioesterase PaaI family.

The sequence is that of Putative esterase HI_1161 from Haemophilus influenzae (strain ATCC 51907 / DSM 11121 / KW20 / Rd).